A 230-amino-acid chain; its full sequence is Ion-translocating oxidoreductase complex subunit E (230 aa).

6 helical membrane passes run 11–31 (GMWANNPALVQLLGLCPLLAV), 39–59 (LGLGIATLLVLVGSNVSVSLV), 69–89 (IPVFVMIIASLVTCVQLLMNA), 93–113 (GLYLSLGIFIPLIVTNCIIIG), 132–152 (FWMGLGMTSVLVVLGAMREII), and 182–202 (SFLLALLPPGAFIGVGFLIAL).

It belongs to the NqrDE/RnfAE family. The complex is composed of six subunits: RnfA, RnfB, RnfC, RnfD, RnfE and RnfG.

It localises to the cell inner membrane. Functionally, part of a membrane-bound complex that couples electron transfer with translocation of ions across the membrane. This chain is Ion-translocating oxidoreductase complex subunit E, found in Vibrio atlanticus (strain LGP32) (Vibrio splendidus (strain Mel32)).